A 344-amino-acid polypeptide reads, in one-letter code: D-amino-acid oxidase (344 aa).

Positions 11, 14, 49, 53, 55, and 167 each coordinate FAD. Positions 229 and 290 each coordinate (R)-lactate. The anthranilate site is built by Y229 and R290. R290, S321, G324, Y325, and Q326 together coordinate FAD.

Belongs to the DAMOX/DASOX family. FAD is required as a cofactor.

The protein resides in the peroxisome. The enzyme catalyses a D-alpha-amino acid + O2 + H2O = a 2-oxocarboxylate + H2O2 + NH4(+). The catalysed reaction is D-alanine + O2 + H2O = pyruvate + H2O2 + NH4(+). Functionally, catalyzes the oxidative deamination of D-amino acids with broad substrate specificity. Enables the organism to utilize D-amino acids as a source of nutrients. Enables the organism to utilize D-alanine as a source of nitrogen. The protein is D-amino-acid oxidase of Komagataella phaffii (strain GS115 / ATCC 20864) (Yeast).